An 82-amino-acid polypeptide reads, in one-letter code: Acyl carrier protein (82 aa).

A Carrier domain is found at 3-78; sequence QEIFERVKKV…KAVEHISEKV (76 aa). S38 bears the O-(pantetheine 4'-phosphoryl)serine mark.

This sequence belongs to the acyl carrier protein (ACP) family. 4'-phosphopantetheine is transferred from CoA to a specific serine of apo-ACP by AcpS. This modification is essential for activity because fatty acids are bound in thioester linkage to the sulfhydryl of the prosthetic group.

The protein resides in the cytoplasm. Its pathway is lipid metabolism; fatty acid biosynthesis. Carrier of the growing fatty acid chain in fatty acid biosynthesis. In Gloeothece citriformis (strain PCC 7424) (Cyanothece sp. (strain PCC 7424)), this protein is Acyl carrier protein.